The sequence spans 444 residues: Exodeoxyribonuclease 7 large subunit (444 aa).

Belongs to the XseA family. As to quaternary structure, heterooligomer composed of large and small subunits.

It localises to the cytoplasm. The catalysed reaction is Exonucleolytic cleavage in either 5'- to 3'- or 3'- to 5'-direction to yield nucleoside 5'-phosphates.. Its function is as follows. Bidirectionally degrades single-stranded DNA into large acid-insoluble oligonucleotides, which are then degraded further into small acid-soluble oligonucleotides. This is Exodeoxyribonuclease 7 large subunit from Pseudoalteromonas atlantica (strain T6c / ATCC BAA-1087).